An 88-amino-acid chain; its full sequence is Phosphocarrier protein HPr (88 aa).

One can recognise an HPr domain in the interval 1–88 (MKKIQVVVKD…KAVLEKHQVI (88 aa)). His-15 serves as the catalytic Pros-phosphohistidine intermediate. Residue Ser-47 is modified to Phosphoserine; by HPrK/P.

Belongs to the HPr family.

It is found in the cytoplasm. Its activity is regulated as follows. Phosphorylation on Ser-47 inhibits the phosphoryl transfer from enzyme I to HPr. Its function is as follows. General (non sugar-specific) component of the phosphoenolpyruvate-dependent sugar phosphotransferase system (sugar PTS). This major carbohydrate active-transport system catalyzes the phosphorylation of incoming sugar substrates concomitantly with their translocation across the cell membrane. The phosphoryl group from phosphoenolpyruvate (PEP) is transferred to the phosphoryl carrier protein HPr by enzyme I. Phospho-HPr then transfers it to the PTS EIIA domain. Functionally, P-Ser-HPr interacts with the catabolite control protein A (CcpA), forming a complex that binds to DNA at the catabolite response elements cre, operator sites preceding a large number of catabolite-regulated genes. Thus, P-Ser-HPr is a corepressor in carbon catabolite repression (CCR), a mechanism that allows bacteria to coordinate and optimize the utilization of available carbon sources. P-Ser-HPr also plays a role in inducer exclusion, in which it probably interacts with several non-PTS permeases and inhibits their transport activity. This is Phosphocarrier protein HPr (ptsH) from Mycoplasma pneumoniae (strain ATCC 29342 / M129 / Subtype 1) (Mycoplasmoides pneumoniae).